Here is an 83-residue protein sequence, read N- to C-terminus: U5-theraphotoxin-Hs1a 3 (83 aa).

Residues 1-21 (MKTSMFLTLTGLVLLFVVCYA) form the signal peptide. A propeptide spanning residues 22–49 (SESEEKDFPKELLSSIFAADSDFKVEER) is cleaved from the precursor. Disulfide bonds link C51-C63, C56-C68, and C62-C75.

This sequence belongs to the neurotoxin 10 (Hwtx-1) family. 51 (Hntx-8) subfamily. Hntx-8 sub-subfamily. As to expression, expressed by the venom gland.

It is found in the secreted. In terms of biological role, agglutinates erythrocytes. The chain is U5-theraphotoxin-Hs1a 3 from Cyriopagopus schmidti (Chinese bird spider).